A 973-amino-acid polypeptide reads, in one-letter code: UvrABC system protein A (973 aa).

34-41 contributes to the ATP binding site; the sequence is GLSGSGKS. ABC transporter domains are found at residues 330–609 and 629–958; these read WAKS…PNSI and AKKN…QFLK. ATP is bound at residue 662–669; the sequence is GVSGGGKS. Residues 761–787 form a C4-type zinc finger; the sequence is CEACQGDGVIKIEMHFLPDVYVTCDVC.

Belongs to the ABC transporter superfamily. UvrA family. In terms of assembly, forms a heterotetramer with UvrB during the search for lesions.

The protein localises to the cytoplasm. The UvrABC repair system catalyzes the recognition and processing of DNA lesions. UvrA is an ATPase and a DNA-binding protein. A damage recognition complex composed of 2 UvrA and 2 UvrB subunits scans DNA for abnormalities. When the presence of a lesion has been verified by UvrB, the UvrA molecules dissociate. The chain is UvrABC system protein A from Mesorhizobium japonicum (strain LMG 29417 / CECT 9101 / MAFF 303099) (Mesorhizobium loti (strain MAFF 303099)).